The sequence spans 472 residues: Major capsid protein (472 aa).

Belongs to the phi29 phage major capsid protein family.

It localises to the virion. Its function is as follows. Assembles to form a prolate capsid of about 45x54 nm, with a T=3, Q=5 symmetry. The polypeptide is Major capsid protein (8) (Bacillus phage GA-1 (Bacteriophage GA-1)).